Consider the following 289-residue polypeptide: tRNA acetyltransferase TAN1 (289 aa).

Basic and acidic residues predominate over residues 1 to 10 (MGEKRNRNGK). 2 disordered regions span residues 1 to 31 (MGEK…DPGT) and 64 to 83 (DIKE…LSIE). A Phosphoserine modification is found at S72. The THUMP domain maps to 146 to 259 (ADPKNMVKRT…KSNIGMCVVD (114 aa)).

It is found in the cytoplasm. The protein resides in the nucleus. Its function is as follows. Probable tRNA acetyltransferase required for the formation of the modified nucleoside N(4)-acetylcytidine in serine and leucine tRNAs. Binds RNA. This chain is tRNA acetyltransferase TAN1 (TAN1), found in Saccharomyces cerevisiae (strain ATCC 204508 / S288c) (Baker's yeast).